Reading from the N-terminus, the 318-residue chain is NADH-ubiquinone oxidoreductase chain 1 (318 aa).

Transmembrane regions (helical) follow at residues 2-22, 70-90, 100-120, 136-156, 171-191, 231-251, 253-273, and 293-313; these read FFIN…FLTL, LFII…VPLP, LGIL…LWSG, VAQT…VLLM, HMWL…STLA, IILM…YINL, ELYS…FLWI, and FLPL…FTAG.

It belongs to the complex I subunit 1 family. In terms of assembly, core subunit of respiratory chain NADH dehydrogenase (Complex I) which is composed of 45 different subunits.

The protein resides in the mitochondrion inner membrane. The catalysed reaction is a ubiquinone + NADH + 5 H(+)(in) = a ubiquinol + NAD(+) + 4 H(+)(out). In terms of biological role, core subunit of the mitochondrial membrane respiratory chain NADH dehydrogenase (Complex I) which catalyzes electron transfer from NADH through the respiratory chain, using ubiquinone as an electron acceptor. Essential for the catalytic activity and assembly of complex I. This is NADH-ubiquinone oxidoreductase chain 1 (Mtnd1) from Mus musculus (Mouse).